A 434-amino-acid polypeptide reads, in one-letter code: 3-phosphoshikimate 1-carboxyvinyltransferase (434 aa).

3 residues coordinate 3-phosphoshikimate: Lys-22, Ser-23, and Arg-27. Position 22 (Lys-22) interacts with phosphoenolpyruvate. Residues Gly-93 and Arg-121 each contribute to the phosphoenolpyruvate site. 3-phosphoshikimate is bound by residues Ser-168, Ser-169, Gln-170, Ser-199, Asp-320, and Lys-347. Residue Gln-170 coordinates phosphoenolpyruvate. The Proton acceptor role is filled by Asp-320. Positions 351, 394, and 419 each coordinate phosphoenolpyruvate.

It belongs to the EPSP synthase family. As to quaternary structure, monomer.

The protein resides in the cytoplasm. The enzyme catalyses 3-phosphoshikimate + phosphoenolpyruvate = 5-O-(1-carboxyvinyl)-3-phosphoshikimate + phosphate. It participates in metabolic intermediate biosynthesis; chorismate biosynthesis; chorismate from D-erythrose 4-phosphate and phosphoenolpyruvate: step 6/7. Functionally, catalyzes the transfer of the enolpyruvyl moiety of phosphoenolpyruvate (PEP) to the 5-hydroxyl of shikimate-3-phosphate (S3P) to produce enolpyruvyl shikimate-3-phosphate and inorganic phosphate. The sequence is that of 3-phosphoshikimate 1-carboxyvinyltransferase from Burkholderia ambifaria (strain ATCC BAA-244 / DSM 16087 / CCUG 44356 / LMG 19182 / AMMD) (Burkholderia cepacia (strain AMMD)).